The following is a 203-amino-acid chain: Endo-type membrane-bound lytic murein transglycosylase A (203 aa).

The signal sequence occupies residues 1–15 (MKLRWFAFLMVLLAG). Cysteine 16 carries the N-palmitoyl cysteine lipid modification. Cysteine 16 carries S-diacylglycerol cysteine lipidation.

It belongs to the transglycosylase Slt family.

It is found in the cell outer membrane. The catalysed reaction is Endolytic cleavage of the (1-&gt;4)-beta-glycosidic linkage between N-acetylmuramic acid (MurNAc) and N-acetylglucosamine (GlcNAc) residues in peptidoglycan with concomitant formation of a 1,6-anhydrobond in the MurNAc residue.. Its function is as follows. Murein-degrading enzyme. May play a role in recycling of muropeptides during cell elongation and/or cell division. Preferentially cleaves at a distance of more than two disaccharide units from the ends of the glycan chain. The polypeptide is Endo-type membrane-bound lytic murein transglycosylase A (Enterobacter sp. (strain 638)).